Reading from the N-terminus, the 380-residue chain is 5-amino-6-(D-ribitylamino)uracil--L-tyrosine 4-hydroxyphenyl transferase (380 aa).

Residues Val56–Asn303 form the Radical SAM core domain. [4Fe-4S] cluster is bound by residues Cys70, Cys74, and Cys77.

This sequence belongs to the radical SAM superfamily. CofH family. Consists of two subunits, CofG and CofH. Requires [4Fe-4S] cluster as cofactor.

It catalyses the reaction 5-amino-6-(D-ribitylamino)uracil + L-tyrosine + S-adenosyl-L-methionine = 5-amino-5-(4-hydroxybenzyl)-6-(D-ribitylimino)-5,6-dihydrouracil + 2-iminoacetate + 5'-deoxyadenosine + L-methionine + H(+). Its pathway is cofactor biosynthesis; coenzyme F0 biosynthesis. Catalyzes the radical-mediated synthesis of 5-amino-5-(4-hydroxybenzyl)-6-(D-ribitylimino)-5,6-dihydrouracil from 5-amino-6-(D-ribitylamino)uracil and L-tyrosine. The polypeptide is 5-amino-6-(D-ribitylamino)uracil--L-tyrosine 4-hydroxyphenyl transferase (Nostoc punctiforme (strain ATCC 29133 / PCC 73102)).